The following is a 200-amino-acid chain: Holliday junction branch migration complex subunit RuvA (200 aa).

The interval 1-63 (MIASVRGEVL…EDSMTLYGFP (63 aa)) is domain I. The interval 64–142 (DSESKELFGL…AVGSTSGAVP (79 aa)) is domain II. The segment at 142-146 (PLGAG) is flexible linker. The domain III stretch occupies residues 147-200 (GGGSVRDQIVEALVGLGFPAKQAEQATDSVLAEAPESTTSSALRSALSLLGKTR).

This sequence belongs to the RuvA family. Homotetramer. Forms an RuvA(8)-RuvB(12)-Holliday junction (HJ) complex. HJ DNA is sandwiched between 2 RuvA tetramers; dsDNA enters through RuvA and exits via RuvB. An RuvB hexamer assembles on each DNA strand where it exits the tetramer. Each RuvB hexamer is contacted by two RuvA subunits (via domain III) on 2 adjacent RuvB subunits; this complex drives branch migration. In the full resolvosome a probable DNA-RuvA(4)-RuvB(12)-RuvC(2) complex forms which resolves the HJ.

The protein resides in the cytoplasm. Functionally, the RuvA-RuvB-RuvC complex processes Holliday junction (HJ) DNA during genetic recombination and DNA repair, while the RuvA-RuvB complex plays an important role in the rescue of blocked DNA replication forks via replication fork reversal (RFR). RuvA specifically binds to HJ cruciform DNA, conferring on it an open structure. The RuvB hexamer acts as an ATP-dependent pump, pulling dsDNA into and through the RuvAB complex. HJ branch migration allows RuvC to scan DNA until it finds its consensus sequence, where it cleaves and resolves the cruciform DNA. This Rhodococcus opacus (strain B4) protein is Holliday junction branch migration complex subunit RuvA.